Here is a 248-residue protein sequence, read N- to C-terminus: Probable phosphatase VFMJ11_A0091 (248 aa).

Zn(2+) is bound by residues histidine 8, histidine 10, histidine 16, histidine 41, glutamate 74, histidine 102, histidine 132, aspartate 194, and histidine 196.

Belongs to the PHP family. The cofactor is Zn(2+).

This is Probable phosphatase VFMJ11_A0091 from Aliivibrio fischeri (strain MJ11) (Vibrio fischeri).